The following is an 84-amino-acid chain: Alpha-mammal toxin Aah3 (84 aa).

The N-terminal stretch at 1–19 (MNYLVMISLALLLMTGVES) is a signal peptide. Positions 21–82 (RDGYIVDSKN…PIKDPSYKCH (62 aa)) constitute an LCN-type CS-alpha/beta domain. 4 cysteine pairs are disulfide-bonded: C31-C81, C35-C53, C39-C63, and C43-C65. R84 is a propeptide (removed by a carboxypeptidase).

It belongs to the long (4 C-C) scorpion toxin superfamily. Sodium channel inhibitor family. Alpha subfamily. As to expression, expressed by the venom gland.

The protein localises to the secreted. Its function is as follows. Alpha toxins bind voltage-independently at site-3 of sodium channels (Nav) and inhibit the inactivation of the activated channels, thereby blocking neuronal transmission. This is Alpha-mammal toxin Aah3 from Androctonus australis (Sahara scorpion).